Consider the following 1323-residue polypeptide: Alpha-factor-transporting ATPase (1323 aa).

Over residues 1–10 (MFQEKSEKSS) the composition is skewed to basic and acidic residues. The segment at 1 to 23 (MFQEKSEKSSFPKRSSSLRSPSD) is disordered. The segment covering 12–23 (PKRSSSLRSPSD) has biased composition (low complexity). Asparagine 37 is a glycosylation site (N-linked (GlcNAc...) asparagine). A helical transmembrane segment spans residues 42–62 (WPLILVGILLMGGSAIATLMN). The 293-residue stretch at 45 to 337 (ILVGILLMGG…ITELLAILNT (293 aa)) folds into the ABC transmembrane type-1 1 domain. A glycan (N-linked (GlcNAc...) asparagine) is linked at asparagine 83. Residues 93-113 (LCVGLIGIGCCKMILVWLGMF) traverse the membrane as a helical segment. A glycan (N-linked (GlcNAc...) asparagine) is linked at asparagine 136. The next 4 helical transmembrane spans lie at 169 to 189 (ILASLMQTIVLILALLIMSFY), 192 to 212 (WSTTLIIMASFPIMALCGWYF), 281 to 301 (VLKTLTLMMFVQGFWFGNYLL), and 315 to 335 (FSSCLMLGQAVSGITELLAIL). One can recognise an ABC transporter 1 domain in the interval 373-609 (IYFKNVWFES…EIVQNYKSQG (237 aa)). An ATP-binding site is contributed by 408–415 (GKSGSGKS). N-linked (GlcNAc...) asparagine glycosylation is present at asparagine 450. A helical transmembrane segment spans residues 677–697 (LLGFGILLAIFQGVSSPVFSY). The ABC transmembrane type-1 2 domain maps to 678-969 (LGFGILLAIF…LIHQLPEITR (292 aa)). An N-linked (GlcNAc...) asparagine glycan is attached at asparagine 714. The helical transmembrane segment at 724–744 (CISLSIAIFTGVTSYLSEFIL) threads the bilayer. N-linked (GlcNAc...) asparagine glycans are attached at residues asparagine 777 and asparagine 789. 3 helical membrane passes run 801-821 (FFPLLANLVSMTLIGIIWSIV), 828-848 (LVGISFVPLVLLVTVLYGKIL), and 909-929 (IGFAISDLFSSIGQAIILFYG). Residue asparagine 939 is glycosylated (N-linked (GlcNAc...) asparagine). Residues 941-961 (SQLLQVITLLSFTISNASILI) traverse the membrane as a helical segment. Asparagine 991, asparagine 1030, and asparagine 1039 each carry an N-linked (GlcNAc...) asparagine glycan. The ABC transporter 2 domain maps to 1035–1321 (ISFNNVSFSY…DGEFTKITKT (287 aa)). Residue 1071–1078 (GQSGSGKS) participates in ATP binding. Asparagine 1097 is a glycosylation site (N-linked (GlcNAc...) asparagine). The helical transmembrane segment at 1120 to 1140 (GLLCQTIAIVPQFPKFFSGTI) threads the bilayer. Residues asparagine 1143, asparagine 1149, and asparagine 1157 are each glycosylated (N-linked (GlcNAc...) asparagine). A helical transmembrane segment spans residues 1170–1190 (ILKLVNLHQFIVSLPQGLLTI). The N-linked (GlcNAc...) asparagine glycan is linked to asparagine 1192. Residues 1194 to 1208 (SDNDNDNGNENENEN) are compositionally biased toward acidic residues. Residues 1194–1217 (SDNDNDNGNENENENENGNTISTS) form a disordered region.

The protein belongs to the ABC transporter superfamily. Alpha-factor sex pheromone exporter (TC 3.A.1.206) family.

It is found in the membrane. It catalyses the reaction an [alpha-factor](in) + ATP + H2O = an [alpha-factor](out) + ADP + phosphate + H(+). The sequence is that of Alpha-factor-transporting ATPase (HST6) from Candida albicans (strain WO-1) (Yeast).